A 439-amino-acid polypeptide reads, in one-letter code: Ribosomal protein uS12 methylthiotransferase RimO (439 aa).

The region spanning 3–113 (HKVGFVSLGC…VVNAVHQHLP (111 aa)) is the MTTase N-terminal domain. [4Fe-4S] cluster is bound by residues Cys12, Cys48, Cys77, Cys144, Cys148, and Cys151. One can recognise a Radical SAM core domain in the interval 130-367 (LTPRHYAYLK…MQVQAEISRN (238 aa)). Positions 370-436 (KNKIGSTQTV…DYDLYGDLEY (67 aa)) constitute a TRAM domain.

Belongs to the methylthiotransferase family. RimO subfamily. The cofactor is [4Fe-4S] cluster.

It is found in the cytoplasm. The enzyme catalyses L-aspartate(89)-[ribosomal protein uS12]-hydrogen + (sulfur carrier)-SH + AH2 + 2 S-adenosyl-L-methionine = 3-methylsulfanyl-L-aspartate(89)-[ribosomal protein uS12]-hydrogen + (sulfur carrier)-H + 5'-deoxyadenosine + L-methionine + A + S-adenosyl-L-homocysteine + 2 H(+). Its function is as follows. Catalyzes the methylthiolation of an aspartic acid residue of ribosomal protein uS12. The polypeptide is Ribosomal protein uS12 methylthiotransferase RimO (Legionella pneumophila (strain Paris)).